We begin with the raw amino-acid sequence, 2038 residues long: HEAT repeat-containing protein 5A (2038 aa).

HEAT repeat units lie at residues 850 to 887 (EVRRLVLTLVLGALESPTPLLRCAASEAWARLAQVADD) and 1082 to 1119 (LLRRAVLACLRQLVQREAAEVSEHAIMLARDGRDAAAD). The disordered stretch occupies residues 1646–1668 (RSAEVDDGASEKETLPEFGEGKD). Ser-1647 is modified (phosphoserine).

This sequence belongs to the HEATR5 family.

This is HEAT repeat-containing protein 5A (Heatr5a) from Mus musculus (Mouse).